Consider the following 720-residue polypeptide: Polyribonucleotide nucleotidyltransferase (720 aa).

The Mg(2+) site is built by Asp484 and Asp490. The 60-residue stretch at 551-610 (PRMYKINIDPSKIGSVIGSGGKTIRSIIEQTNTTVDIENDGTVVIGAIDEASAKKAIKII) folds into the KH domain. The region spanning 620 to 688 (GSIYTGKVTR…NQGRVNLSHR (69 aa)) is the S1 motif domain. Residues 697–720 (PISRNRDSQPRRPGPFRPSDRSNS) form a disordered region.

The protein belongs to the polyribonucleotide nucleotidyltransferase family. The cofactor is Mg(2+).

Its subcellular location is the cytoplasm. The catalysed reaction is RNA(n+1) + phosphate = RNA(n) + a ribonucleoside 5'-diphosphate. In terms of biological role, involved in mRNA degradation. Catalyzes the phosphorolysis of single-stranded polyribonucleotides processively in the 3'- to 5'-direction. The protein is Polyribonucleotide nucleotidyltransferase of Dehalococcoides mccartyi (strain ATCC BAA-2100 / JCM 16839 / KCTC 5957 / BAV1).